The chain runs to 664 residues: DNA ligase (664 aa).

Residues 31-35, 80-81, and Glu-110 contribute to the NAD(+) site; these read DSTYD and SL. Lys-112 serves as the catalytic N6-AMP-lysine intermediate. NAD(+) is bound by residues Arg-133, Glu-167, Lys-282, and Lys-306. 4 residues coordinate Zn(2+): Cys-400, Cys-403, Cys-418, and Cys-423. One can recognise a BRCT domain in the interval 583-664; the sequence is QSNAPLAGKT…LLEELAKYEG (82 aa).

It belongs to the NAD-dependent DNA ligase family. LigA subfamily. It depends on Mg(2+) as a cofactor. Mn(2+) serves as cofactor.

It carries out the reaction NAD(+) + (deoxyribonucleotide)n-3'-hydroxyl + 5'-phospho-(deoxyribonucleotide)m = (deoxyribonucleotide)n+m + AMP + beta-nicotinamide D-nucleotide.. Its function is as follows. DNA ligase that catalyzes the formation of phosphodiester linkages between 5'-phosphoryl and 3'-hydroxyl groups in double-stranded DNA using NAD as a coenzyme and as the energy source for the reaction. It is essential for DNA replication and repair of damaged DNA. In Exiguobacterium sibiricum (strain DSM 17290 / CCUG 55495 / CIP 109462 / JCM 13490 / 255-15), this protein is DNA ligase.